The sequence spans 408 residues: MATKPIAKVRKSVPKKVESQVGYFGSYGGRFVPETLMAALQELEAAYEAAKRDKKFKEEIESLLREYAGRPTPLFLAKNLTQKLGGAKIYLKREDLLHTGAHKINNCIGQGLLARRMGKHRIIAETGAGQHGVASATVAALFGMECVVYMGSEDVRRQELNVFRMKLLGAEVVSVNSGSRTLKDAINEAMRDWVTNVRTTHYLLGSVLGAHPYPMMVRDFHRVISREAKAQIMKAEGKLPTAIIACVGGGSNAIGAFYEFIGDKKVQLIGVEAGGRGKALGEHAARFRGGAPGVLQGTYSYVLQDEHGQIAGTHSVSAGLDYPAIGPEHAALAEAGRAEYVAASDAEALAACSMLAKTEGIIPALESSHAVAECVRRAPQMRKSDVVIVNISGRGDKDIGILREQLRF.

Lysine 103 bears the N6-(pyridoxal phosphate)lysine mark.

Belongs to the TrpB family. As to quaternary structure, tetramer of two alpha and two beta chains. The cofactor is pyridoxal 5'-phosphate.

It catalyses the reaction (1S,2R)-1-C-(indol-3-yl)glycerol 3-phosphate + L-serine = D-glyceraldehyde 3-phosphate + L-tryptophan + H2O. It functions in the pathway amino-acid biosynthesis; L-tryptophan biosynthesis; L-tryptophan from chorismate: step 5/5. In terms of biological role, the beta subunit is responsible for the synthesis of L-tryptophan from indole and L-serine. In Koribacter versatilis (strain Ellin345), this protein is Tryptophan synthase beta chain.